The primary structure comprises 475 residues: Ribulose bisphosphate carboxylase large chain (475 aa).

The propeptide occupies 1-2 (MS). The residue at position 3 (P3) is an N-acetylproline. K14 is subject to N6,N6,N6-trimethyllysine. Residues N123 and T173 each coordinate substrate. K175 acts as the Proton acceptor in catalysis. K177 contacts substrate. Mg(2+)-binding residues include K201, D203, and E204. K201 carries the N6-carboxylysine modification. The active-site Proton acceptor is H294. R295, H327, and S379 together coordinate substrate.

This sequence belongs to the RuBisCO large chain family. Type I subfamily. As to quaternary structure, heterohexadecamer of 8 large chains and 8 small chains; disulfide-linked. The disulfide link is formed within the large subunit homodimers. Mg(2+) is required as a cofactor. The disulfide bond which can form in the large chain dimeric partners within the hexadecamer appears to be associated with oxidative stress and protein turnover.

The protein localises to the plastid. Its subcellular location is the chloroplast. The enzyme catalyses 2 (2R)-3-phosphoglycerate + 2 H(+) = D-ribulose 1,5-bisphosphate + CO2 + H2O. The catalysed reaction is D-ribulose 1,5-bisphosphate + O2 = 2-phosphoglycolate + (2R)-3-phosphoglycerate + 2 H(+). In terms of biological role, ruBisCO catalyzes two reactions: the carboxylation of D-ribulose 1,5-bisphosphate, the primary event in carbon dioxide fixation, as well as the oxidative fragmentation of the pentose substrate in the photorespiration process. Both reactions occur simultaneously and in competition at the same active site. This chain is Ribulose bisphosphate carboxylase large chain, found in Eucalyptus globulus subsp. globulus (Tasmanian blue gum).